A 218-amino-acid polypeptide reads, in one-letter code: Histone H1 (218 aa).

Low complexity-rich tracts occupy residues 1 to 19 (MSET…GAKA) and 27 to 39 (AAGG…PAGP). Disordered stretches follow at residues 1-41 (MSET…GPSV) and 89-218 (VGKG…PKKK). S2 is subject to N-acetylserine. In terms of domain architecture, H15 spans 37 to 110 (AGPSVTELIT…GASGSFKLNK (74 aa)). Composition is skewed to basic residues over residues 119-133 (ATKK…KPAA), 141-158 (KKPK…KAKK), 166-184 (KAAK…KKAA), and 191-218 (KAVK…PKKK).

This sequence belongs to the histone H1/H5 family.

It localises to the nucleus. Its subcellular location is the chromosome. Functionally, histones H1 are necessary for the condensation of nucleosome chains into higher-order structures. This is Histone H1 from Anas platyrhynchos (Mallard).